Consider the following 521-residue polypeptide: GMP synthase [glutamine-hydrolyzing] (521 aa).

The Glutamine amidotransferase type-1 domain occupies 5–203 (KILILDFGSQ…VHEICGCGND (199 aa)). C82 acts as the Nucleophile in catalysis. Residues H177 and E179 contribute to the active site. Residues 204-396 (WNMPDYISEA…LGLPHDMVYR (193 aa)) enclose the GMPS ATP-PPase domain. 231 to 237 (SGGVDSS) serves as a coordination point for ATP.

As to quaternary structure, homodimer.

It carries out the reaction XMP + L-glutamine + ATP + H2O = GMP + L-glutamate + AMP + diphosphate + 2 H(+). Its pathway is purine metabolism; GMP biosynthesis; GMP from XMP (L-Gln route): step 1/1. Its function is as follows. Catalyzes the synthesis of GMP from XMP. This chain is GMP synthase [glutamine-hydrolyzing], found in Azoarcus sp. (strain BH72).